Here is a 165-residue protein sequence, read N- to C-terminus: Pyruvoyl-dependent arginine decarboxylase 1 (165 aa).

Serine 45 is subject to Pyruvic acid (Ser).

It belongs to the PdaD family. The cofactor is pyruvate.

It catalyses the reaction L-arginine + H(+) = agmatine + CO2. The chain is Pyruvoyl-dependent arginine decarboxylase 1 (pdaD1) from Methanosarcina mazei (strain ATCC BAA-159 / DSM 3647 / Goe1 / Go1 / JCM 11833 / OCM 88) (Methanosarcina frisia).